We begin with the raw amino-acid sequence, 313 residues long: tRNA dimethylallyltransferase (313 aa).

An ATP-binding site is contributed by 8–15; the sequence is GPTGTGKS. 10–15 lines the substrate pocket; sequence TGTGKS.

The protein belongs to the IPP transferase family. In terms of assembly, monomer. It depends on Mg(2+) as a cofactor.

It catalyses the reaction adenosine(37) in tRNA + dimethylallyl diphosphate = N(6)-dimethylallyladenosine(37) in tRNA + diphosphate. Functionally, catalyzes the transfer of a dimethylallyl group onto the adenine at position 37 in tRNAs that read codons beginning with uridine, leading to the formation of N6-(dimethylallyl)adenosine (i(6)A). The polypeptide is tRNA dimethylallyltransferase (Mycolicibacterium gilvum (strain PYR-GCK) (Mycobacterium gilvum (strain PYR-GCK))).